Here is a 175-residue protein sequence, read N- to C-terminus: Cytochrome c homolog (175 aa).

The Cytoplasmic segment spans residues 1–8 (MSGKELNK). The helical; Signal-anchor transmembrane segment at 9-29 (IVAAILFASLIAMMVGFVANI) threads the bilayer. At 30–175 (LYKPTLELQH…LFLKTYVHDK (146 aa)) the chain is on the periplasmic side. Heme c contacts are provided by Cys84, Cys87, His88, and Met150.

It belongs to the cytochrome c family. Binds 1 heme c group covalently per subunit.

The protein resides in the cell membrane. Its function is as follows. May be involved in electron transfer from bc1 complex to aa3. The polypeptide is Cytochrome c homolog (cycM) (Rickettsia conorii (strain ATCC VR-613 / Malish 7)).